We begin with the raw amino-acid sequence, 553 residues long: Dihydroxy-acid dehydratase (553 aa).

Position 78 (aspartate 78) interacts with Mg(2+). Position 119 (cysteine 119) interacts with [2Fe-2S] cluster. Aspartate 120 and lysine 121 together coordinate Mg(2+). Lysine 121 carries the N6-carboxylysine modification. Position 193 (cysteine 193) interacts with [2Fe-2S] cluster. Glutamate 441 serves as a coordination point for Mg(2+). Serine 467 serves as the catalytic Proton acceptor.

It belongs to the IlvD/Edd family. In terms of assembly, homodimer. [2Fe-2S] cluster is required as a cofactor. It depends on Mg(2+) as a cofactor.

The catalysed reaction is (2R)-2,3-dihydroxy-3-methylbutanoate = 3-methyl-2-oxobutanoate + H2O. It carries out the reaction (2R,3R)-2,3-dihydroxy-3-methylpentanoate = (S)-3-methyl-2-oxopentanoate + H2O. It functions in the pathway amino-acid biosynthesis; L-isoleucine biosynthesis; L-isoleucine from 2-oxobutanoate: step 3/4. Its pathway is amino-acid biosynthesis; L-valine biosynthesis; L-valine from pyruvate: step 3/4. Functionally, functions in the biosynthesis of branched-chain amino acids. Catalyzes the dehydration of (2R,3R)-2,3-dihydroxy-3-methylpentanoate (2,3-dihydroxy-3-methylvalerate) into 2-oxo-3-methylpentanoate (2-oxo-3-methylvalerate) and of (2R)-2,3-dihydroxy-3-methylbutanoate (2,3-dihydroxyisovalerate) into 2-oxo-3-methylbutanoate (2-oxoisovalerate), the penultimate precursor to L-isoleucine and L-valine, respectively. In Pelobacter propionicus (strain DSM 2379 / NBRC 103807 / OttBd1), this protein is Dihydroxy-acid dehydratase.